A 275-amino-acid chain; its full sequence is Dermonecrotic toxin LhSicTox-alphaVI1ii (275 aa).

Histidine 5 is a catalytic residue. 2 residues coordinate Mg(2+): glutamate 25 and aspartate 27. The active-site Nucleophile is histidine 41. 2 disulfide bridges follow: cysteine 45-cysteine 51 and cysteine 47-cysteine 192. Aspartate 85 contributes to the Mg(2+) binding site.

It belongs to the arthropod phospholipase D family. Class II subfamily. Mg(2+) is required as a cofactor. As to expression, expressed by the venom gland.

The protein resides in the secreted. It carries out the reaction an N-(acyl)-sphingosylphosphocholine = an N-(acyl)-sphingosyl-1,3-cyclic phosphate + choline. It catalyses the reaction an N-(acyl)-sphingosylphosphoethanolamine = an N-(acyl)-sphingosyl-1,3-cyclic phosphate + ethanolamine. The catalysed reaction is a 1-acyl-sn-glycero-3-phosphocholine = a 1-acyl-sn-glycero-2,3-cyclic phosphate + choline. The enzyme catalyses a 1-acyl-sn-glycero-3-phosphoethanolamine = a 1-acyl-sn-glycero-2,3-cyclic phosphate + ethanolamine. Functionally, dermonecrotic toxins cleave the phosphodiester linkage between the phosphate and headgroup of certain phospholipids (sphingolipid and lysolipid substrates), forming an alcohol (often choline) and a cyclic phosphate. This toxin acts on sphingomyelin (SM). It may also act on ceramide phosphoethanolamine (CPE), lysophosphatidylcholine (LPC) and lysophosphatidylethanolamine (LPE), but not on lysophosphatidylserine (LPS), and lysophosphatidylglycerol (LPG). It acts by transphosphatidylation, releasing exclusively cyclic phosphate products as second products. Induces dermonecrosis, hemolysis, increased vascular permeability, edema, inflammatory response, and platelet aggregation. This Loxosceles hirsuta (Recluse spider) protein is Dermonecrotic toxin LhSicTox-alphaVI1ii.